We begin with the raw amino-acid sequence, 359 residues long: 3-dehydroquinate synthase (359 aa).

Residues 71 to 76, 105 to 109, 129 to 130, K142, K151, and 169 to 172 each bind NAD(+); these read DGEQFK, GVIGD, TT, and CLQT. Positions 184, 247, and 264 each coordinate Zn(2+).

This sequence belongs to the sugar phosphate cyclases superfamily. Dehydroquinate synthase family. NAD(+) is required as a cofactor. The cofactor is Co(2+). Requires Zn(2+) as cofactor.

The protein localises to the cytoplasm. The enzyme catalyses 7-phospho-2-dehydro-3-deoxy-D-arabino-heptonate = 3-dehydroquinate + phosphate. Its pathway is metabolic intermediate biosynthesis; chorismate biosynthesis; chorismate from D-erythrose 4-phosphate and phosphoenolpyruvate: step 2/7. Catalyzes the conversion of 3-deoxy-D-arabino-heptulosonate 7-phosphate (DAHP) to dehydroquinate (DHQ). In Shewanella oneidensis (strain ATCC 700550 / JCM 31522 / CIP 106686 / LMG 19005 / NCIMB 14063 / MR-1), this protein is 3-dehydroquinate synthase.